The sequence spans 492 residues: Cobyric acid synthase (492 aa).

One can recognise a GATase cobBQ-type domain in the interval 252–440; that stretch reads RPKIAVLAYP…VHGLFADDHL (189 aa). The active-site Nucleophile is Cys-334. His-432 is an active-site residue.

This sequence belongs to the CobB/CobQ family. CobQ subfamily.

The protein operates within cofactor biosynthesis; adenosylcobalamin biosynthesis. Its function is as follows. Catalyzes amidations at positions B, D, E, and G on adenosylcobyrinic A,C-diamide. NH(2) groups are provided by glutamine, and one molecule of ATP is hydrogenolyzed for each amidation. The chain is Cobyric acid synthase from Bradyrhizobium sp. (strain BTAi1 / ATCC BAA-1182).